The chain runs to 331 residues: Phenylalanine--tRNA ligase alpha subunit (331 aa).

Glu256 is a binding site for Mg(2+).

This sequence belongs to the class-II aminoacyl-tRNA synthetase family. Phe-tRNA synthetase alpha subunit type 1 subfamily. In terms of assembly, tetramer of two alpha and two beta subunits. Requires Mg(2+) as cofactor.

It localises to the cytoplasm. It carries out the reaction tRNA(Phe) + L-phenylalanine + ATP = L-phenylalanyl-tRNA(Phe) + AMP + diphosphate + H(+). This Colwellia psychrerythraea (strain 34H / ATCC BAA-681) (Vibrio psychroerythus) protein is Phenylalanine--tRNA ligase alpha subunit.